A 404-amino-acid chain; its full sequence is Advanced glycosylation end product-specific receptor (404 aa).

The N-terminal stretch at 1-22 (MAAGTAVGAWVLVLSLWGAVVG) is a signal peptide. An Ig-like V-type domain is found at 23–116 (AQNITARIGE…KETKSNYRVR (94 aa)). The Extracellular segment spans residues 23–342 (AQNITARIGE…VGGSGLGTLA (320 aa)). N-linked (GlcNAc...) asparagine glycans are attached at residues N25 and N81. Cystine bridges form between C38–C99 and C144–C208. 2 consecutive Ig-like C2-type domains span residues 124–221 (PEIV…RALR) and 227–317 (PRVW…RAVS). Residues 343-363 (LALGILGGLGTAALLIGVILW) form a helical membrane-spanning segment. Topologically, residues 364–404 (QRRQRRGEERKAPENQEEEEERAELNQSEEPEAGESSTGGP) are cytoplasmic. Residues 367 to 404 (QRRGEERKAPENQEEEEERAELNQSEEPEAGESSTGGP) are disordered. Positions 378 to 396 (NQEEEEERAELNQSEEPEA) are enriched in acidic residues. Position 391 is a phosphoserine; by PKC/PRKCZ and ATM (S391).

As to quaternary structure, constitutive homodimer; disulfide-linked. Forms homooligomers. Interacts with S100A1 and APP. Interacts with S100B, S100A12 and S100A14. Interacts with TIRAP. Interacts with HMGB1. Interacts with LGP2; this interaction plays an important role in AGER-mediated pro-inflammatory responses and cytokine release. Interacts with double-strand break repair protein MRE11 which is a core component of the MRN complex. The interaction enhances MRE11 endonuclease activity and promotes DNA repair. Interacts with the MCM2-7 complex via interaction with complex member MCM2; the interaction is increased following DNA replication stress and stabilizes the MCM2-7 complex at replication forks. Interacts with longistatin, a protein from the saliva of the tick, Haemaphysalis longicornis; the interaction attenuates AGER-mediated production of reactive oxygen species (ROS), activation of NF-kappa-B and expression of adhesion molecules and cytokines in human endothelial cells. Post-translationally, phosphorylated on its cytoplasmic domain by PKCzeta/PRKCZ upon ligand binding. Phosphorylated by ATM following DNA damage. Targeted by the ubiquitin E3 ligase subunit FBXO10 to mediate its ubiquitination and degradation. In terms of tissue distribution, endothelial cells. Increased expression in pre-term labor and preeclampsia placentas compared to controls.

It localises to the cell membrane. It is found in the cell projection. The protein localises to the phagocytic cup. Its subcellular location is the early endosome. The protein resides in the nucleus. It localises to the secreted. Cell surface pattern recognition receptor that senses endogenous stress signals with a broad ligand repertoire including advanced glycation end products, S100 proteins, high-mobility group box 1 protein/HMGB1, amyloid beta/APP oligomers, nucleic acids, histones, phospholipids and glycosaminoglycans. Advanced glycosylation end products are nonenzymatically glycosylated proteins which accumulate in vascular tissue in aging and at an accelerated rate in diabetes. These ligands accumulate at inflammatory sites during the pathogenesis of various diseases including diabetes, vascular complications, neurodegenerative disorders and cancers, and RAGE transduces their binding into pro-inflammatory responses. Upon ligand binding, uses TIRAP and MYD88 as adapters to transduce the signal ultimately leading to the induction of inflammatory cytokines IL6, IL8 and TNFalpha through activation of NF-kappa-B. Interaction with S100A12 on endothelium, mononuclear phagocytes, and lymphocytes triggers cellular activation, with generation of key pro-inflammatory mediators. Interaction with S100B after myocardial infarction may play a role in myocyte apoptosis by activating ERK1/2 and p53/TP53 signaling. Contributes to the translocation of amyloid-beta peptide (ABPP) across the cell membrane from the extracellular to the intracellular space in cortical neurons. ABPP-initiated RAGE signaling, especially stimulation of p38 mitogen-activated protein kinase (MAPK), has the capacity to drive a transport system delivering ABPP as a complex with RAGE to the intraneuronal space. Participates in endothelial albumin transcytosis together with HMGB1 through the RAGE/SRC/Caveolin-1 pathway, leading to endothelial hyperpermeability. Mediates the loading of HMGB1 in extracellular vesicles (EVs) that shuttle HMGB1 to hepatocytes by transferrin-mediated endocytosis and subsequently promote hepatocyte pyroptosis by activating the NLRP3 inflammasome. Binds to DNA and promotes extracellular hypomethylated DNA (CpG DNA) uptake by cells via the endosomal route to activate inflammatory responses. Mediates phagocytosis by non-professional phagocytes (NPP) and this is enhanced by binding to ligands including RNA, DNA, HMGB1 and histones. Promotes NPP-mediated phagocytosis of Saccharomyces cerevisiae spores by binding to RNA attached to the spore wall. Also promotes NPP-mediated phagocytosis of apoptotic cells. Following DNA damage, recruited to DNA double-strand break sites where it colocalizes with the MRN repair complex via interaction with double-strand break repair protein MRE11. Enhances the endonuclease activity of MRE11, promoting the end resection of damaged DNA. Promotes DNA damage repair in trophoblasts which enhances trophoblast invasion and contributes to placental development and maintenance. Protects cells from DNA replication stress by localizing to damaged replication forks where it stabilizes the MCM2-7 complex and promotes faithful progression of the replication fork. Mediates the production of reactive oxygen species (ROS) in human endothelial cells. In Homo sapiens (Human), this protein is Advanced glycosylation end product-specific receptor (AGER).